Here is a 540-residue protein sequence, read N- to C-terminus: DNA topoisomerase 1 (540 aa).

Residues 1 to 110 form the Toprim domain; sequence MELFIVESPT…NIKRAVFYEI (110 aa). 2 residues coordinate Mg(2+): glutamate 7 and aspartate 79. Positions 126-536 constitute a Topo IA-type catalytic domain; sequence NMNLVYAQFA…FMEKIFGKEL (411 aa). The segment at 161 to 166 is interaction with DNA; that stretch reads SAGRVQ. Tyrosine 281 serves as the catalytic O-(5'-phospho-DNA)-tyrosine intermediate.

This sequence belongs to the type IA topoisomerase family. In terms of assembly, monomer. The cofactor is Mg(2+).

It carries out the reaction ATP-independent breakage of single-stranded DNA, followed by passage and rejoining.. Functionally, releases the supercoiling and torsional tension of DNA, which is introduced during the DNA replication and transcription, by transiently cleaving and rejoining one strand of the DNA duplex. Introduces a single-strand break via transesterification at a target site in duplex DNA. The scissile phosphodiester is attacked by the catalytic tyrosine of the enzyme, resulting in the formation of a DNA-(5'-phosphotyrosyl)-enzyme intermediate and the expulsion of a 3'-OH DNA strand. The free DNA strand then undergoes passage around the unbroken strand, thus removing DNA supercoils. Finally, in the religation step, the DNA 3'-OH attacks the covalent intermediate to expel the active-site tyrosine and restore the DNA phosphodiester backbone. This is DNA topoisomerase 1 from Aquifex aeolicus (strain VF5).